Consider the following 435-residue polypeptide: E3 ubiquitin-protein ligase PUB22 (435 aa).

One can recognise a U-box domain in the interval 6-81; the sequence is EIPSFFLCPI…QSWCTLNASY (76 aa).

Interacts with RPN12A. Binds to EXO70B2. Post-translationally, auto-ubiquitinated leading to degradation via the 26S proteasome. This Auto-ubiquitination is repressed by the bacterial elicitor flg22 thus leading to a transiently increased protein stabilization and accumulation.

It localises to the cytoplasm. It carries out the reaction S-ubiquitinyl-[E2 ubiquitin-conjugating enzyme]-L-cysteine + [acceptor protein]-L-lysine = [E2 ubiquitin-conjugating enzyme]-L-cysteine + N(6)-ubiquitinyl-[acceptor protein]-L-lysine.. Its pathway is protein modification; protein ubiquitination. E3 ubiquitin-protein ligase that negatively regulates water stress response. May control in coordination with PUB23 a drought signaling pathway by ubiquitinating cytosolic RPN12a. Acts as a negative regulator of the immunity triggered by the pathogen-associated molecular patterns (PAMPs), in association with PUB23 and PUB24. Regulates EXO70B2 ubiquitination and degradation via the 26S proteasome to attenuate PAMP-induced signaling. This Arabidopsis thaliana (Mouse-ear cress) protein is E3 ubiquitin-protein ligase PUB22.